The sequence spans 229 residues: Ribose-5-phosphate isomerase A (229 aa).

Substrate is bound by residues 28 to 31 (TGST), 85 to 88 (DGAD), and 98 to 101 (KGRG). The Proton acceptor role is filled by E107. K125 serves as a coordination point for substrate.

It belongs to the ribose 5-phosphate isomerase family. Homodimer.

It carries out the reaction aldehydo-D-ribose 5-phosphate = D-ribulose 5-phosphate. It functions in the pathway carbohydrate degradation; pentose phosphate pathway; D-ribose 5-phosphate from D-ribulose 5-phosphate (non-oxidative stage): step 1/1. Functionally, catalyzes the reversible conversion of ribose-5-phosphate to ribulose 5-phosphate. The protein is Ribose-5-phosphate isomerase A of Thermococcus kodakarensis (strain ATCC BAA-918 / JCM 12380 / KOD1) (Pyrococcus kodakaraensis (strain KOD1)).